The chain runs to 390 residues: Dual-specificity RNA methyltransferase RlmN (390 aa).

Glu111 acts as the Proton acceptor in catalysis. Residues 117–356 (EDDRATLCVS…VIVRKTRGDD (240 aa)) form the Radical SAM core domain. Residues Cys124 and Cys361 are joined by a disulfide bond. Residues Cys131, Cys135, and Cys138 each contribute to the [4Fe-4S] cluster site. S-adenosyl-L-methionine-binding positions include 185–186 (GE), Ser217, 239–241 (SLH), and Asn318. Residue Cys361 is the S-methylcysteine intermediate of the active site.

The protein belongs to the radical SAM superfamily. RlmN family. The cofactor is [4Fe-4S] cluster.

The protein resides in the cytoplasm. The catalysed reaction is adenosine(2503) in 23S rRNA + 2 reduced [2Fe-2S]-[ferredoxin] + 2 S-adenosyl-L-methionine = 2-methyladenosine(2503) in 23S rRNA + 5'-deoxyadenosine + L-methionine + 2 oxidized [2Fe-2S]-[ferredoxin] + S-adenosyl-L-homocysteine. The enzyme catalyses adenosine(37) in tRNA + 2 reduced [2Fe-2S]-[ferredoxin] + 2 S-adenosyl-L-methionine = 2-methyladenosine(37) in tRNA + 5'-deoxyadenosine + L-methionine + 2 oxidized [2Fe-2S]-[ferredoxin] + S-adenosyl-L-homocysteine. Its function is as follows. Specifically methylates position 2 of adenine 2503 in 23S rRNA and position 2 of adenine 37 in tRNAs. m2A2503 modification seems to play a crucial role in the proofreading step occurring at the peptidyl transferase center and thus would serve to optimize ribosomal fidelity. The polypeptide is Dual-specificity RNA methyltransferase RlmN (Edwardsiella ictaluri (strain 93-146)).